A 725-amino-acid polypeptide reads, in one-letter code: mRNA decay activator protein ZFP36L3 (725 aa).

The span at 1–25 shows a compositional bias: low complexity; it reads MANNNLNRPLNTNVADSSNSSSTPG. Positions 1 to 119 are disordered; that stretch reads MANNNLNRPL…KVSGSSSLAT (119 aa). 2 stretches are compositionally biased toward polar residues: residues 42-72 and 100-119; these read APSS…QSGA and HSLQ…SLAT. 2 consecutive C3H1-type zinc fingers follow at residues 122–150 and 160–188; these read RYKT…HGYR and KYKT…HNQP. The tract at residues 193-711 is necessary for cytoplasmic localization; sequence VLSESTLEEP…ESEFDNTNSS (519 aa). The segment at 276 to 310 is disordered; the sequence is STTAHDADKDPDKDADKDPSNNSANDALAFPQEPG. Residues 280-294 are compositionally biased toward basic and acidic residues; sequence HDADKDPDKDADKDP. A run of 4 helical transmembrane segments spans residues 380-400, 420-440, 441-461, and 468-488; these read LAPA…AMAL, AALA…GAAM, APGA…MATG, and AAMA…GAAV. The interval 686–709 is disordered; sequence DEDDFLRRSSSSSSLNESEFDNTN. The span at 693–702 shows a compositional bias: low complexity; it reads RSSSSSSLNE.

Expressed in placenta and extraembryonic tissues (at protein level). Not detected in embryos and fetus.

It localises to the cytoplasm. The protein resides in the membrane. In terms of biological role, placenta-specific zinc-finger RNA-binding protein that destabilizes cytoplasmic AU-rich element (ARE)-containing mRNA transcripts by promoting their poly(A) tail removal or deadenylation, and hence provide a mechanism for attenuating protein synthesis. Binds to the 3'-UTR ARE of placental target mRNAs, such as TNF, HBEGF and LIPG. Involved in placental expression of many genes important for normal placental physiology. In Mus musculus (Mouse), this protein is mRNA decay activator protein ZFP36L3.